Consider the following 859-residue polypeptide: Villin-like protein (859 aa).

Gelsolin-like repeat units lie at residues 24-76 (LKML…EARE), 148-188 (VSAT…SEKA), 264-308 (LVVQ…QEKK), 401-450 (LQRQ…EDTK), 521-561 (TRTM…DQRE), and 624-665 (LVLT…WKKE). Residues 793–859 (SMVNGSLPRE…QQAKKKLGFF (67 aa)) enclose the HP domain.

Belongs to the villin/gelsolin family.

In terms of biological role, possible tumor suppressor. This chain is Villin-like protein, found in Mus musculus (Mouse).